Reading from the N-terminus, the 383-residue chain is Gap junction alpha-1 protein (383 aa).

At 2–23 the chain is on the cytoplasmic side; it reads GDWSALGKLLDKVQAYSTAGGK. The residue at position 5 (S5) is a Phosphoserine. A helical transmembrane segment spans residues 24–44; it reads VWLSVLFIFRILLLGTAVESA. Residues 45–76 are Extracellular-facing; it reads WGDEQSAFRCNTQQPGCENVCYDKSFPISHVR. 2 disulfide bridges follow: C54–C193 and C188–C199. A helical transmembrane segment spans residues 77 to 97; it reads FWVLQIIFVSVPTLLYLAHVF. At 98–156 the chain is on the cytoplasmic side; the sequence is YVMRKEEKLNKKEEELKVVAQTDGANVDMHLKQIEIKKFKYGIEEHGKVKMRGGLLRTY. K145 participates in a covalent cross-link: Glycyl lysine isopeptide (Lys-Gly) (interchain with G-Cter in SUMO). A helical transmembrane segment spans residues 157–177; that stretch reads IISILFKSVFEVAFLLIQWYI. Residues 178-208 lie on the Extracellular side of the membrane; the sequence is YGFSLSAVYTCKRDPCPHQVDCFLSRPTEKT. The chain crosses the membrane as a helical span at residues 209-229; that stretch reads IFIIFMLVVSLVSLALNIIEL. Topologically, residues 230–383 are cytoplasmic; the sequence is FYVFFKGVKD…SRPRPDDLEI (154 aa). Residue K238 forms a Glycyl lysine isopeptide (Lys-Gly) (interchain with G-Cter in SUMO) linkage. Residues 245–383 are interaction with NOV; it reads SDPYHTTTGP…SRPRPDDLEI (139 aa). Residue Y248 is modified to Phosphotyrosine. Phosphoserine is present on residues S256, S258, and S263. Positions 265–383 are interaction with UBQLN4; it reads KYAYFNGCSS…SRPRPDDLEI (119 aa). Residue C272 is modified to S-nitrosocysteine. T276 carries the post-translational modification Phosphothreonine. A phosphoserine mark is found at S307 and S315. Positions 318-333 are enriched in polar residues; that stretch reads QNRMGQAGSTISNSHA. A disordered region spans residues 318–383; it reads QNRMGQAGST…SRPRPDDLEI (66 aa). A Phosphoserine; by CK1 modification is found at S326. The residue at position 327 (T327) is a Phosphothreonine. S329 and S331 each carry phosphoserine; by CK1. Residues 339–352 are compositionally biased toward basic and acidic residues; the sequence is PDDHQNSKKLDAGH. A phosphoserine mark is found at S345 and S366. The segment covering 363 to 375 has biased composition (low complexity); sequence RPSSRASSRASSR. S369 bears the Phosphoserine; by PKC/PRKCG and PKC/PRKCD mark. Phosphoserine occurs at positions 370 and 374.

It belongs to the connexin family. Alpha-type (group II) subfamily. A connexon is composed of a hexamer of connexins. Interacts with SGSM3. Interacts with RIC1/CIP150. Interacts with CNST and CSNK1D. Interacts (via C-terminus) with TJP1. Interacts (via C-terminus) with SRC (via SH3 domain). Interacts (not ubiquitinated) with UBQLN4 (via UBA domain). Interacts with NOV. Interacts with TMEM65. Interacts with ANK3/ANKG and PKP2. Phosphorylation at Ser-326, Ser-329 and Ser-331 by CK1 modulates gap junction assembly. Phosphorylated at Ser-369 by PRKCG; phosphorylation induces disassembly of gap junction plaques and inhibition of gap junction activity. Phosphorylation at Ser-369 by PRKCD triggers its internalization into small vesicles leading to proteasome-mediated degradation. Post-translationally, sumoylated with SUMO1, SUMO2 and SUMO3, which may regulate the level of functional Cx43 gap junctions at the plasma membrane. May be desumoylated by SENP1 or SENP2. In terms of processing, acetylated in the developing cortex; leading to delocalization from the cell membrane.

Its subcellular location is the cell membrane. The protein resides in the cell junction. It localises to the gap junction. The protein localises to the endoplasmic reticulum. Its function is as follows. Gap junction protein that acts as a regulator of bladder capacity. A gap junction consists of a cluster of closely packed pairs of transmembrane channels, the connexons, through which materials of low MW diffuse from one cell to a neighboring cell. May play a critical role in the physiology of hearing by participating in the recycling of potassium to the cochlear endolymph. Negative regulator of bladder functional capacity: acts by enhancing intercellular electrical and chemical transmission, thus sensitizing bladder muscles to cholinergic neural stimuli and causing them to contract. May play a role in cell growth inhibition through the regulation of NOV expression and localization. Plays an essential role in gap junction communication in the ventricles. The protein is Gap junction alpha-1 protein (GJA1) of Bos taurus (Bovine).